The following is a 535-amino-acid chain: Peroxisomal membrane protein PEX29 (535 aa).

2 consecutive transmembrane segments (helical) span residues 139–159 (LSVPFVLIDQVIIIFSWSKPL) and 176–196 (ILLLSLPFFYTCFEIIVPAYM). N239 carries an N-linked (GlcNAc...) asparagine glycan. The chain crosses the membrane as a helical span at residues 247–267 (MLLYVMSYDFVTSLIVKYLYF). N-linked (GlcNAc...) asparagine glycosylation is present at N271. 2 helical membrane-spanning segments follow: residues 272-292 (ITIFIFVALLTSGTLLTLFGA) and 297-317 (AMLPFIKVTLSVGLWAATIAM). N450 and N515 each carry an N-linked (GlcNAc...) asparagine glycan. The interval 511–535 (AHRRNKSMESSNSLHPVKSIDSVDG) is disordered.

The protein belongs to the PEX28-32 family. PEX29 subfamily.

The protein localises to the endoplasmic reticulum membrane. Functionally, with PEX23, contributes to the formation of endoplasmic reticulum-mitochondria junctions which are important for mitochondrial function. Involved in lipid dropplets formation. This chain is Peroxisomal membrane protein PEX29, found in Ogataea parapolymorpha (strain ATCC 26012 / BCRC 20466 / JCM 22074 / NRRL Y-7560 / DL-1) (Yeast).